Reading from the N-terminus, the 430-residue chain is MSRNQQLFDRAQQTIPGGVNSPVRAFRSVGGTPRFITRAEGAYMWDADGQRYIDYIGSWGPMIVGHAHPDVVRAVQETATQSFSFGAPTEAEIDMAEEICKLVPSIEQVRLVSSGTEATMSALRLARGFTGRDLIIKFEGCYHGHADSLLVKAGSGLLTFADTTQNAPSSAGVPADVTRHTMVLEYNNVTQLEEAFARHKGEIAAVIVEPVAGNMNLVRASEAFLTAMRNLCSEHGSVLIFDEVMTGFRVALGGAQAHYGIKPDMTCLGKVIGGGMPAAAFGGRRDIMAKLAPLGGVYQAGTLSGNPLAVAAGLTTLRLIQAPGFYDRLATQTRKLADGLTKAAREAGVPFCADAIGGMFGIYFTNEVPGSFAEVTKADVGRFNRFFHAMLAEGVYLAPSAFEAGFVSAKHDDAIIEATVAAAAKAFKAG.

An N6-(pyridoxal phosphate)lysine modification is found at Lys270.

The protein belongs to the class-III pyridoxal-phosphate-dependent aminotransferase family. HemL subfamily. In terms of assembly, homodimer. Pyridoxal 5'-phosphate serves as cofactor.

It is found in the cytoplasm. The catalysed reaction is (S)-4-amino-5-oxopentanoate = 5-aminolevulinate. It functions in the pathway porphyrin-containing compound metabolism; protoporphyrin-IX biosynthesis; 5-aminolevulinate from L-glutamyl-tRNA(Glu): step 2/2. The chain is Glutamate-1-semialdehyde 2,1-aminomutase from Cupriavidus metallidurans (strain ATCC 43123 / DSM 2839 / NBRC 102507 / CH34) (Ralstonia metallidurans).